Consider the following 279-residue polypeptide: Protease HtpX homolog (279 aa).

Transmembrane regions (helical) follow at residues 6–26 (TVAL…MMGG) and 28–48 (GGAL…YWFS). Histidine 127 is a Zn(2+) binding site. Residue glutamate 128 is part of the active site. Residue histidine 131 coordinates Zn(2+). Helical transmembrane passes span 137-157 (ILIG…AHMA) and 177-197 (LGLL…QMAI). A Zn(2+)-binding site is contributed by glutamate 202.

The protein belongs to the peptidase M48B family. Zn(2+) is required as a cofactor.

Its subcellular location is the cell inner membrane. In Syntrophotalea carbinolica (strain DSM 2380 / NBRC 103641 / GraBd1) (Pelobacter carbinolicus), this protein is Protease HtpX homolog.